The following is a 774-amino-acid chain: Transforming acidic coiled-coil-containing protein 1 (774 aa).

Position 2 is an N-acetylalanine (Ala-2). The interval 2 to 56 (AFSPWQILSPVQWAKWTWSAVRGSGAGEDEAGGPEGDPEEEEDSQAETKSLSFSS) is interaction with LSM7 and SNRPG. Residues Ser-4, Ser-10, and Ser-45 each carry the phosphoserine modification. Residues 21–142 (AVRGSGAGED…VKDVRGKAEH (122 aa)) are disordered. Positions 28–46 (GEDEAGGPEGDPEEEEDSQ) are enriched in acidic residues. Residues 48–61 (ETKSLSFSSDSEGN) show a composition bias toward polar residues. Basic and acidic residues predominate over residues 88-99 (PEAKPQESREAD). Residues 113-128 (DTCSRSSENEAPQATV) show a composition bias toward polar residues. Over residues 131 to 142 (HPVKDVRGKAEH) the composition is skewed to basic and acidic residues. Ser-148 and Ser-154 each carry phosphoserine. Residues 153 to 255 (FSIETRNCTD…PEMLMEGSPL (103 aa)) form an interaction with TDRD7 region. Residues 207 to 424 (EAFTEASLKT…NNINTDDSGD (218 aa)) are interaction with YEATS4. Residues 214 to 428 (LKTGGPCPEP…TDDSGDPCKP (215 aa)) are disordered. SPAZ domains lie at 216-294 (TGGP…TAGV) and 354-504 (SKPV…TDEE). The residue at position 228 (Ser-228) is a Phosphoserine; by AURKC. Positions 228-241 (SKLRKPKPVSLRKK) are enriched in basic residues. Phosphoserine occurs at positions 376 and 401. Residues 397-407 (ILQNSPPLSSK) are compositionally biased toward polar residues. Positions 452–468 (PKKAKSRLITSGCKVKK) match the Bipartite nuclear localization signal motif. 2 positions are modified to phosphoserine: Ser-480 and Ser-560. Positions 579–774 (IREEIITKEI…ELIAKLGKTD (196 aa)) form a coiled coil. Residues 670–774 (VLEGFKKNEE…ELIAKLGKTD (105 aa)) are interaction with CH-TOG.

Belongs to the TACC family. Interacts with CH-TOG and YEATS4. Interacts with the AURKA and AURKB and AURKC. Interacts with LSM7, TDRD7 and SNRPG. Interacts with GCN5L2 and PCAF. Interacts with the thyroid hormone receptors THRB and THRA, predominantly with isoform alpha-2. The interaction with THRA isoform alpha-1 and THRB is decreased in the presence of thyroid hormone T3. Interacts with RARA in the nucleus. Also interacts with other nuclear receptors, including ESR1, NR3C1, PPARG and RXRA, preferentially in the absence of their hormonal ligands.

The protein resides in the cytoplasm. The protein localises to the nucleus. It is found in the cytoskeleton. Its subcellular location is the microtubule organizing center. It localises to the centrosome. The protein resides in the midbody. Its function is as follows. Involved in transcription regulation induced by nuclear receptors, including in T3 thyroid hormone and all-trans retinoic acid pathways. Might promote the nuclear localization of the receptors. Likely involved in the processes that promote cell division prior to the formation of differentiated tissues. In Mus musculus (Mouse), this protein is Transforming acidic coiled-coil-containing protein 1 (Tacc1).